The sequence spans 3414 residues: MAGKAVLKGKGGGPPRRASKVAPKKTRQLRVQMPNGLVLMRMLGVLWHALTGTARSPVLKAFWKVVPLKQATLALRKIKRTVSTLMVGLHRRGSRRTTIDWMTPLLITVMLGMCLTATVRRERDGSMVIRAEGRDAATQVRVENGTCVILATDMGSWCDDSLAYECVTIDQGEEPVDVDCFCRGVEKVTLEYGRCGRREGSRSRRSVLIPSHAQRDLTGRGHQWLEGEAVKAHLTRVEGWVWKNKLFTLSLVMVAWLMVDGLLPRILIVVVALALVPAYASRCTHLENRDFVTGVQGTTRLTLVLELGGCVTVTADGKPSLDVWLDSIYQESPAQTREYCLHAKLTGTKVAARCPTMGPATLPEEHQSGTVCKRDQSDRGWGNHCGLFGKGSIVTCVKFTCEDKKKATGHVYDVNKITYTIKVEPHTGEFVAANETHSGRKSASFTVSSEKTILTLGDYGDVSLLCRVASGVDLAQTVVLALDKTHEHLPTAWQVHRDWFNDLALPWKHDGAEAWNEAGRLVEFGTPHAVKMDVFNLGDQTGVLLKSLAGVPVASIEGTKYHLKSGHVTCEVGLEKLKMKGLTYTVCDKTKFTWKRAPTDSGHDTVVMEVGFSGTRPCRIPVRAVAHGVPEVNVAMLITPNPTMENNGGGFIEMQLPPGDNIIYVGDLNHQWFQKGSSIGRVLQKTRKGIERLTVLGEHAWDFGSVGGVMTSIGRAMHTVLGGAFNTLLGGVGFLPKILLGVAMAWLGLNMRNPTLSMGFLLSGGLVLAMTLGVGADVGCAVDTERMELRCGEGLVVWREVSEWYDNYVFHPETPAVLASAVQRAYEEEICGIVPQNRLEMAMWRSSLVELNLALAEGEANLTVVVDKADPSDYRGGVPGLLNKGKDIKVSWRSWGRSMLWSVPEAPRRFMIGVEGGRECPFARRKTGVMTVAEFGIGLRTKVFMDLRQELTTECDTGVMGAAVKNGMAVHTDQSLWMKSIKNDTTVTIVELIVTDLRNCTWPASHTIDNAGVVNSKLFLPASLAGPRSTYNVIPGYAEQVRGPWAHTPVRIKREECPGTRVTIDKACDKRGASVRSTTESGKVIPEWCCRTCELPPVTYRTGTDCWYAMEIRPVHTQGGLVRSMVVADNGALLSEGGVPGVVALFVVLELVIRRRPATGGTVIWGGIAILALLVTGLVSVESLFRYLVAVGLVFQLELGPEAVAMVLLQAVFEMRTCLLSGFVLRRSITTREIVTVYFLLLVLEMGIPVKGLEHLWRWTDALAMGAIIFRACTAEGKTGIGLLLAAFMTQSDMNIIHDGLTAFLCVATTMAIWRYIRGQGERKGLTWIVPLAGILGGEGSGVRLLAFWELAASRGRRSFNEPMTVIGVMLTLASGMMRHTSQEAVCAMALAAFLLLMLTLGTRKMQLLAEWSGNIEWNPELTSEGGEVSLRVRQDALGNLHLTELEKEERMMAFWLVVGLIASAFHWSGILIVMGLWTISEMLGSPRRTDLVFSGCSEGRSDSRPLDVKNGVYRIYTPGLLWGQRQIGVGYGAKGVLHTMWHVTRGAALLVDGVAVGPYWADVREDVVCYGGAWSLESRWRGETVQVHAFPPGRAHETHQCQPGELILENGRKMGAIPIDLAKGTSGSPIMNSQGEVVGLYGNGLKTNDTYVSSIAQGEVEKSRPNLPQSVVGTGWTAKGQITVLDMHPGSGKTHRVLPELIRQCVERRLRTLVLAPTRVVLREMERALSGKNVRFHSPAVTEQHANGAIVDVMCHATYVNRRLLPQGRQNWEVAIMDEAHWTDPHSIAARGHLYSLAKENRCAFVLMTATPPGKSEPFPESNGAIASEERQIPDGEWRDGFDWITEYEGRTAWFVPSIARGGAIARALRQRGKSVICLNSKTFDKEYSRVKDEKPDFVVTTDISEMGANLDVTRVIDGRTNIKPEEVDGRIELTGTRRVTTASAAQRRGRVGRQGGRTDEYIYSGQCDDDDSGLVQWKEAQILLDNITTARGPVATFYGPEQERMTETAGHYRLPEEKRKHFRHLLAQCDFTPWLAWHVAANVASVTDRSWTWEGPEENAVDENNGELVTFRSPNGAERTLRPVWRDARMFREGRDIREFVSYASGRRSVGDVLMGMSGVPALLRQRCTSAMDVFYTLMHEEPGSRAMRIGERDAPEAFLTAVEMLVLGLATLGVVWCFVVRTSVSRMVLGTLVLATSLIFLWAGGVGYGNMAGVALVFYTLLTVLQPETGKQRSSDDNKLAYFLLTLCGLAGMVAANEMGLLEKTKADLAALFARDQGETVRWGEWTNLDIQPARSWGTYVLVVSLFTPYMLHQLQTRIQQLVNSAVASGAQAMRDLGGGTPFFGVAGHVLALGVASLVGATPTSLILGVGLAAFHLAIVVSGLEAELTQRAHKVFFSAMVRNPMVDGDVINPFGDGEAKPALYERKLSLILALVLCLASVVMNRTFVAVTEAGAVGVAAAMQLLRPEMDVLWTMPVACGMSGVVRGSLWGLLPLGHRLWLRTTGTRRGGSEGDTLGDMWKARLNSCTKEEFFAYRRAGVMETDREKARELLKRGETNMGLAVSRGTSKLAWMEERGYVTLKGEVVDLGCGRGGWSYYAASRPAVMSVRAYTIGGKGHESPRMVTSLGWNLIKFRAGMDVFSMEPHRADAILCDIGESNPDAVVEGERSRRVILLMEQWKNRNPTATCVFKVLAPYRPEVIEALHRFQLQWGGGLVRTPFSRNSTHEMYFSTAITGNIVNSVNIQSRKLLARFGDQRGPTRVPEIDLGVGTRSVVLAEDKVKEKDVMERIQALKDQYCDTWHEDHEHPYRTWQYWGSYKTAATGSSASLLNGVVKLLSWPWNAREDVVRMAMTDTTAFGQQRVFKDKVDTKAQEPQPGTKIIMRAVNDWLLERLVKKSRPRMCSREEFIAKVRSNAALAAWSDEQNKWKSAREAVEDPEFWSLVEAERERHLQGRCAHCVYNMMGKREKKLGEFGVAKGSRAIWYMWLGSRFLEFEALGFLNEDHWASRASSGAGVEGISLNYLGWHLKKLASLSGGLFYADDTAGWDTRITNADLDDEEQILRYMDGDHKKLAATVLRKAYHAKVVRVARPSREGGCVMDIITRRDQRGSGQVVTYALNTITNIKVQLVRMMEGEGVIEVADSHNPRLLRVEKCVEEHGEERLSRMLVSGDDCVVRPVDDRFSKALYFLNDMAKTRKDTGEWEPSTGFASWEEVPFCSHHFHELVMKDGRALVVPCRDQDELVGRARVSPGCGWSVRETACLSKAYGQMWLLSYFHRRDLRTLGFAICSAVPVDWVPTGRTTWSIHASGAWMTTEDMLEVWNRVWIYDNPFMEDKTRVDEWRDTPYLPKSQDILCSSLVGRGERAEWAKNIWGAVEKVRRMIGPEHYRDYLSSMDRHDLHWELKLESSIF.

The segment at 1–27 is disordered; sequence MAGKAVLKGKGGGPPRRASKVAPKKTR. The Cytoplasmic portion of the chain corresponds to 1–98; sequence MAGKAVLKGK…LHRRGSRRTT (98 aa). The segment covering 17 to 27 has biased composition (basic residues); the sequence is RASKVAPKKTR. Residues 97 to 117 constitute a propeptide, ER anchor for the capsid protein C, removed in mature form by serine protease NS3; the sequence is TTIDWMTPLLITVMLGMCLTA. The chain crosses the membrane as a helical span at residues 99–117; it reads IDWMTPLLITVMLGMCLTA. The Extracellular portion of the chain corresponds to 118-242; sequence TVRRERDGSM…HLTRVEGWVW (125 aa). N-linked (GlcNAc...) asparagine; by host glycosylation is present at Asn-144. A helical transmembrane segment spans residues 243-260; sequence KNKLFTLSLVMVAWLMVD. Position 261 (Gly-261) is a topological domain, cytoplasmic. The chain crosses the membrane as a helical span at residues 262–280; that stretch reads LLPRILIVVVALALVPAYA. At 281 to 727 the chain is on the extracellular side; that stretch reads SRCTHLENRD…HTVLGGAFNT (447 aa). Disulfide bonds link Cys-283/Cys-310, Cys-340/Cys-396, Cys-340/Cys-401, Cys-354/Cys-385, Cys-372/Cys-396, and Cys-372/Cys-401. The fusion peptide stretch occupies residues 378–391; it reads DRGWGNHCGLFGKG. N-linked (GlcNAc...) asparagine; by host glycosylation is present at Asn-434. Intrachain disulfides connect Cys-466/Cys-570 and Cys-587/Cys-618. Residues 728–748 traverse the membrane as a helical segment; sequence LLGGVGFLPKILLGVAMAWLG. Topologically, residues 749–755 are cytoplasmic; that stretch reads LNMRNPT. Residues 756 to 776 traverse the membrane as a helical segment; the sequence is LSMGFLLSGGLVLAMTLGVGA. Over 777–1187 the chain is Extracellular; the sequence is DVGCAVDTER…LVSVESLFRY (411 aa). 6 disulfide bridges follow: Cys-780-Cys-791, Cys-831-Cys-920, Cys-955-Cys-1000, Cys-1057-Cys-1106, Cys-1068-Cys-1090, and Cys-1089-Cys-1093. 3 N-linked (GlcNAc...) asparagine; by host glycosylation sites follow: Asn-861, Asn-983, and Asn-999. A helical transmembrane segment spans residues 1188-1208; sequence LVAVGLVFQLELGPEAVAMVL. Residues 1209–1232 lie on the Cytoplasmic side of the membrane; the sequence is LQAVFEMRTCLLSGFVLRRSITTR. The helical transmembrane segment at 1233–1253 threads the bilayer; it reads EIVTVYFLLLVLEMGIPVKGL. Residues 1254–1267 lie on the Lumenal side of the membrane; sequence EHLWRWTDALAMGA. The helical transmembrane segment at 1268–1288 threads the bilayer; that stretch reads IIFRACTAEGKTGIGLLLAAF. The Cytoplasmic portion of the chain corresponds to 1289-1300; sequence MTQSDMNIIHDG. The chain crosses the membrane as a helical span at residues 1301–1319; sequence LTAFLCVATTMAIWRYIRG. Residues 1320-1325 are Lumenal-facing; that stretch reads QGERKG. Residues 1326–1346 form a helical membrane-spanning segment; the sequence is LTWIVPLAGILGGEGSGVRLL. Residues 1347 to 1359 lie on the Cytoplasmic side of the membrane; the sequence is AFWELAASRGRRS. Residues 1360–1378 traverse the membrane as a helical segment; the sequence is FNEPMTVIGVMLTLASGMM. Topologically, residues 1379–1382 are lumenal; that stretch reads RHTS. The helical transmembrane segment at 1383–1403 threads the bilayer; the sequence is QEAVCAMALAAFLLLMLTLGT. Residues 1404–1454 are Cytoplasmic-facing; the sequence is RKMQLLAEWSGNIEWNPELTSEGGEVSLRVRQDALGNLHLTELEKEERMMA. An interacts with and activates NS3 protease region spans residues 1410 to 1449; the sequence is AEWSGNIEWNPELTSEGGEVSLRVRQDALGNLHLTELEKE. Positions 1455–1475 form an intramembrane region, helical; it reads FWLVVGLIASAFHWSGILIVM. At 1476-2160 the chain is on the cytoplasmic side; it reads GLWTISEMLG…RIGERDAPEA (685 aa). Residues 1490-1669 enclose the Peptidase S7 domain; sequence TDLVFSGCSE…EVEKSRPNLP (180 aa). Residues His-1543, Asp-1567, and Ser-1627 each act as charge relay system; for serine protease NS3 activity in the active site. The Helicase ATP-binding domain maps to 1675-1831; it reads TGWTAKGQIT…ESNGAIASEE (157 aa). Residue 1688–1695 participates in ATP binding; that stretch reads MHPGSGKT. Residues 1779-1782 carry the DEAH box motif; sequence DEAH. One can recognise a Helicase C-terminal domain in the interval 1841–2000; sequence DGFDWITEYE…TARGPVATFY (160 aa). Residue Lys-1883 is modified to N6-acetyllysine; by host. The helical transmembrane segment at 2161 to 2181 threads the bilayer; sequence FLTAVEMLVLGLATLGVVWCF. The Lumenal portion of the chain corresponds to 2182–2189; the sequence is VVRTSVSR. The segment at residues 2190-2209 is an intramembrane region (helical); sequence MVLGTLVLATSLIFLWAGGV. A topological domain (lumenal) is located at residue Gly-2210. The helical transmembrane segment at 2211-2231 threads the bilayer; the sequence is YGNMAGVALVFYTLLTVLQPE. The Cytoplasmic portion of the chain corresponds to 2232 to 2238; sequence TGKQRSS. A helical transmembrane segment spans residues 2239-2259; sequence DDNKLAYFLLTLCGLAGMVAA. The Lumenal segment spans residues 2260 to 2296; it reads NEMGLLEKTKADLAALFARDQGETVRWGEWTNLDIQP. The helical intramembrane region spans 2297-2315; it reads ARSWGTYVLVVSLFTPYML. Over 2316–2343 the chain is Lumenal; sequence HQLQTRIQQLVNSAVASGAQAMRDLGGG. The segment at residues 2344-2364 is an intramembrane region (helical); that stretch reads TPFFGVAGHVLALGVASLVGA. Residues 2365-2368 lie on the Lumenal side of the membrane; that stretch reads TPTS. Residues 2369 to 2389 traverse the membrane as a helical segment; it reads LILGVGLAAFHLAIVVSGLEA. Over 2390–2432 the chain is Cytoplasmic; sequence ELTQRAHKVFFSAMVRNPMVDGDVINPFGDGEAKPALYERKLS. Residues 2433–2453 traverse the membrane as a helical segment; the sequence is LILALVLCLASVVMNRTFVAV. At 2454-2477 the chain is on the lumenal side; the sequence is TEAGAVGVAAAMQLLRPEMDVLWT. Residues 2478 to 2498 traverse the membrane as a helical segment; that stretch reads MPVACGMSGVVRGSLWGLLPL. Residues 2499–3414 are Cytoplasmic-facing; the sequence is GHRLWLRTTG…WELKLESSIF (916 aa). In terms of domain architecture, mRNA cap 0-1 NS5-type MT spans 2512–2776; the sequence is GGSEGDTLGD…EIDLGVGTRS (265 aa). Ser-2567 contacts S-adenosyl-L-methionine. Phosphoserine is present on Ser-2567. Residue Lys-2572 is the For 2'-O-MTase activity of the active site. Positions 2597, 2598, 2615, 2616, 2642, and 2643 each coordinate S-adenosyl-L-methionine. The active-site For 2'-O-MTase activity is the Asp-2657. Ile-2658 contacts S-adenosyl-L-methionine. Residues Lys-2694 and Glu-2730 each act as for 2'-O-MTase activity in the active site. An interaction with host SCRIB region spans residues 2730–2734; it reads EMYFS. Position 2732 (Tyr-2732) interacts with S-adenosyl-L-methionine. Residues Glu-2950, His-2954, Cys-2959, and Cys-2962 each coordinate Zn(2+). The RdRp catalytic domain maps to 3040–3189; it reads GLFYADDTAG…RPVDDRFSKA (150 aa). 3 residues coordinate Zn(2+): His-3224, Cys-3240, and Cys-3359.

In the N-terminal section; belongs to the class I-like SAM-binding methyltransferase superfamily. mRNA cap 0-1 NS5-type methyltransferase family. Homodimer. Interacts (via N-terminus) with host EXOC1 (via C-terminus); this interaction results in EXOC1 degradation through the proteasome degradation pathway. As to quaternary structure, forms heterodimers with envelope protein E in the endoplasmic reticulum and Golgi. In terms of assembly, homodimer; in the endoplasmic reticulum and Golgi. Interacts with protein prM. Interacts with non-structural protein 1. Homodimer; Homohexamer when secreted. Interacts with envelope protein E. As to quaternary structure, interacts (via N-terminus) with serine protease NS3. In terms of assembly, forms a heterodimer with serine protease NS3. May form homooligomers. Forms a heterodimer with NS2B. Interacts with non-structural protein 2A (via N-terminus). Interacts with NS4B. Interacts with unphosphorylated RNA-directed RNA polymerase NS5; this interaction stimulates RNA-directed RNA polymerase NS5 guanylyltransferase activity. As to quaternary structure, interacts with serine protease NS3. Interacts with NS1. In terms of assembly, homodimer. Interacts with host STAT2; this interaction inhibits the phosphorylation of the latter, and, when all viral proteins are present (polyprotein), targets STAT2 for degradation. Interacts with serine protease NS3. Interacts with host SCRIB; this interaction targets NS5 to the cell membrane periphery and nucleus, thereby allowing efficient host nuclear STAT1 inhibition. Specific enzymatic cleavages in vivo yield mature proteins. Cleavages in the lumen of endoplasmic reticulum are performed by host signal peptidase, whereas cleavages in the cytoplasmic side are performed by serine protease NS3. Signal cleavage at the 2K-4B site requires a prior NS3 protease-mediated cleavage at the 4A-2K site. In terms of processing, cleaved in post-Golgi vesicles by a host furin, releasing the mature small envelope protein M, and peptide pr. This cleavage is incomplete as up to 30% of viral particles still carry uncleaved prM. Post-translationally, N-glycosylated. N-glycosylated. The excreted form is glycosylated and this is required for efficient secretion of the protein from infected cells. In terms of processing, acetylated by host KAT5. Acetylation modulates NS3 RNA-binding and unwinding activities and plays an important positive role for viral replication. Post-translationally, phosphorylated on serines residues. This phosphorylation may trigger NS5 nuclear localization.

Its subcellular location is the virion. It localises to the host nucleus. It is found in the host cytoplasm. The protein resides in the host perinuclear region. The protein localises to the secreted. Its subcellular location is the virion membrane. It localises to the host endoplasmic reticulum membrane. The catalysed reaction is Selective hydrolysis of -Xaa-Xaa-|-Yaa- bonds in which each of the Xaa can be either Arg or Lys and Yaa can be either Ser or Ala.. The enzyme catalyses RNA(n) + a ribonucleoside 5'-triphosphate = RNA(n+1) + diphosphate. It catalyses the reaction a ribonucleoside 5'-triphosphate + H2O = a ribonucleoside 5'-diphosphate + phosphate + H(+). It carries out the reaction ATP + H2O = ADP + phosphate + H(+). The catalysed reaction is a 5'-end (5'-triphosphoguanosine)-ribonucleoside in mRNA + S-adenosyl-L-methionine = a 5'-end (N(7)-methyl 5'-triphosphoguanosine)-ribonucleoside in mRNA + S-adenosyl-L-homocysteine. The enzyme catalyses a 5'-end (N(7)-methyl 5'-triphosphoguanosine)-ribonucleoside in mRNA + S-adenosyl-L-methionine = a 5'-end (N(7)-methyl 5'-triphosphoguanosine)-(2'-O-methyl-ribonucleoside) in mRNA + S-adenosyl-L-homocysteine + H(+). In terms of biological role, plays a role in virus budding by binding to membrane and gathering the viral RNA into a nucleocapsid that forms the core of a mature virus particle. During virus entry, may induce genome penetration in host cytoplasm after hemifusion induced by surface proteins. Can migrate to the cell nucleus where it modulates host functions. Functionally, inhibits RNA silencing by interfering with host Dicer. Its function is as follows. Prevents premature fusion activity of envelope proteins in trans-Golgi by binding to envelope protein E at pH6.0. After virion release in extracellular space gets dissociated from E dimers. Acts as a chaperone for envelope protein E during intracellular virion assembly by masking and inactivating envelope protein E fusion peptide. prM is the only viral peptide matured by host furin in the trans-Golgi network. Presumably to avoid catastrophic activation of the viral fusion activity in acidic GolGi compartment prior to virion release. prM-E cleavage is ineficient, and many virions are only partially matured. These uncleaved prM would play a role in immune evasion. In terms of biological role, may play a role in virus budding. Exerts cytotoxic effects by activating a mitochondrial apoptotic pathway through M extodomain. May display a viroporin activity. Functionally, binds to host cell surface receptor and mediates fusion between viral and cellular membranes. Envelope protein is synthesized in the endoplasmic reticulum in the form of heterodimer with protein prM. They play a role in virion budding in the ER, and the newly formed immature particle is covered with 60 spikes composed of heterodimer between precursor prM and envelope protein E. The virion is transported to the Golgi apparatus where the low pH causes dissociation of PrM-E heterodimers and formation of E homodimers. prM-E cleavage is ineficient, and many virions are only partially matured. These uncleaved prM would play a role in immune evasion. Its function is as follows. Involved in immune evasion, pathogenesis and viral replication. Once cleaved off the polyprotein, is targeted to three destinations: the viral replication cycle, the plasma membrane and the extracellular compartment. Essential for viral replication. Required for formation of the replication complex and recruitment of other non-structural proteins to the ER-derived membrane structures. Excreted as a hexameric lipoparticle that plays a role against host immune response. Antagonizing the complement function. Binds to the host macrophages and dendritic cells. Inhibits signal transduction originating from Toll-like receptor 3 (TLR3). Component of the viral RNA replication complex that functions in virion assembly and antagonizes the host immune response. In terms of biological role, required cofactor for the serine protease function of NS3. May have membrane-destabilizing activity and form viroporins. Functionally, displays three enzymatic activities: serine protease, NTPase and RNA helicase. NS3 serine protease, in association with NS2B, performs its autocleavage and cleaves the polyprotein at dibasic sites in the cytoplasm: C-prM, NS2A-NS2B, NS2B-NS3, NS3-NS4A, NS4A-2K and NS4B-NS5. NS3 RNA helicase binds RNA and unwinds dsRNA in the 3' to 5' direction. Its function is as follows. Regulates the ATPase activity of the NS3 helicase activity. NS4A allows NS3 helicase to conserve energy during unwinding. Functions as a signal peptide for NS4B and is required for the interferon antagonism activity of the latter. In terms of biological role, induces the formation of ER-derived membrane vesicles where the viral replication takes place. Inhibits interferon (IFN)-induced host STAT1 phosphorylation and nuclear translocation, thereby preventing the establishment of cellular antiviral state by blocking the IFN-alpha/beta pathway. Inhibits STAT2 translocation in the nucleus after IFN-alpha treatment. Functionally, replicates the viral (+) and (-) genome, and performs the capping of genomes in the cytoplasm. NS5 methylates viral RNA cap at guanine N-7 and ribose 2'-O positions. Besides its role in genome replication, also prevents the establishment of cellular antiviral state by blocking the interferon-alpha/beta (IFN-alpha/beta) signaling pathway. Inhibits host TYK2 and STAT2 phosphorylation, thereby preventing activation of JAK-STAT signaling pathway. This is Genome polyprotein from Homo sapiens (Human).